The primary structure comprises 103 residues: ATP synthase F(0) complex subunit g, mitochondrial (103 aa).

At A2 the chain carries N-acetylalanine. N6-acetyllysine occurs at positions 11, 24, 35, and 54.

This sequence belongs to the ATPase g subunit family. As to quaternary structure, component of the ATP synthase complex composed at least of ATP5F1A/subunit alpha, ATP5F1B/subunit beta, ATP5MC1/subunit c (homooctomer), MT-ATP6/subunit a, MT-ATP8/subunit 8, ATP5ME/subunit e, ATP5MF/subunit f, ATP5MG/subunit g, ATP5MK/subunit k, ATP5MJ/subunit j, ATP5F1C/subunit gamma, ATP5F1D/subunit delta, ATP5F1E/subunit epsilon, ATP5PF/subunit F6, ATP5PB/subunit b, ATP5PD/subunit d, ATP5PO/subunit OSCP. ATP synthase complex consists of a soluble F(1) head domain (subunits alpha(3) and beta(3)) - the catalytic core - and a membrane F(0) domain - the membrane proton channel (subunits c, a, 8, e, f, g, k and j). These two domains are linked by a central stalk (subunits gamma, delta, and epsilon) rotating inside the F1 region and a stationary peripheral stalk (subunits F6, b, d, and OSCP).

It is found in the mitochondrion. The protein resides in the mitochondrion inner membrane. Its function is as follows. Subunit g, of the mitochondrial membrane ATP synthase complex (F(1)F(0) ATP synthase or Complex V) that produces ATP from ADP in the presence of a proton gradient across the membrane which is generated by electron transport complexes of the respiratory chain. ATP synthase complex consist of a soluble F(1) head domain - the catalytic core - and a membrane F(1) domain - the membrane proton channel. These two domains are linked by a central stalk rotating inside the F(1) region and a stationary peripheral stalk. During catalysis, ATP synthesis in the catalytic domain of F(1) is coupled via a rotary mechanism of the central stalk subunits to proton translocation. In vivo, can only synthesize ATP although its ATP hydrolase activity can be activated artificially in vitro. Part of the complex F(0) domain. In Homo sapiens (Human), this protein is ATP synthase F(0) complex subunit g, mitochondrial.